The following is a 209-amino-acid chain: FK506-binding protein 2B (209 aa).

The N-terminal stretch at 1 to 19 (MRFSLLALLGTIVATSVSA) is a signal peptide. The PPIase FKBP-type domain maps to 47 to 136 (GDELSMHYTG…VFEVELLEIK (90 aa)). A helical membrane pass occupies residues 157-177 (FTSPSFLVSTGIIVALFLIVF). The stretch at 178-207 (KMAKKQDIAEANEKAAAATAEASTEKKEEK) forms a coiled coil. A disordered region spans residues 190–209 (EKAAAATAEASTEKKEEKKE). Residues 200–209 (STEKKEEKKE) show a composition bias toward basic and acidic residues.

This sequence belongs to the FKBP-type PPIase family. FKBP2 subfamily.

It is found in the membrane. It catalyses the reaction [protein]-peptidylproline (omega=180) = [protein]-peptidylproline (omega=0). Inhibited by both FK506 and rapamycin. In terms of biological role, PPIases accelerate the folding of proteins. It catalyzes the cis-trans isomerization of proline imidic peptide bonds in oligopeptides. The protein is FK506-binding protein 2B (FKBP3) of Rhizopus delemar (strain RA 99-880 / ATCC MYA-4621 / FGSC 9543 / NRRL 43880) (Mucormycosis agent).